The primary structure comprises 222 residues: Kunitz trypsin inhibitor 3 (222 aa).

The N-terminal stretch at 1–23 (MEKLTLSFITLTVLSAIFTAASA) is a signal peptide. The N-linked (GlcNAc...) asparagine glycan is linked to N65. Intrachain disulfides connect C72–C119 and C165–C173. Residue N175 is glycosylated (N-linked (GlcNAc...) asparagine).

It belongs to the protease inhibitor I3 (leguminous Kunitz-type inhibitor) family.

Functionally, exhibits Kunitz trypsin protease inhibitor activity. The protein is Kunitz trypsin inhibitor 3 of Arabidopsis thaliana (Mouse-ear cress).